We begin with the raw amino-acid sequence, 263 residues long: Hydroxyethylthiazole kinase (263 aa).

M41 lines the substrate pocket. ATP contacts are provided by R117 and S163. Position 190 (G190) interacts with substrate.

It belongs to the Thz kinase family. The cofactor is Mg(2+).

It catalyses the reaction 5-(2-hydroxyethyl)-4-methylthiazole + ATP = 4-methyl-5-(2-phosphooxyethyl)-thiazole + ADP + H(+). It participates in cofactor biosynthesis; thiamine diphosphate biosynthesis; 4-methyl-5-(2-phosphoethyl)-thiazole from 5-(2-hydroxyethyl)-4-methylthiazole: step 1/1. Catalyzes the phosphorylation of the hydroxyl group of 4-methyl-5-beta-hydroxyethylthiazole (THZ). The chain is Hydroxyethylthiazole kinase from Lactiplantibacillus plantarum (strain ATCC BAA-793 / NCIMB 8826 / WCFS1) (Lactobacillus plantarum).